The sequence spans 100 residues: NADH-quinone oxidoreductase subunit K (100 aa).

A run of 3 helical transmembrane segments spans residues 4–24 (TSYYILLSALLFTLGVAGVLI), 29–49 (LVLFMSVELMLNSANLALVTF), and 60–80 (IVVFFVIVVAAAEVAVGLALL).

Belongs to the complex I subunit 4L family. As to quaternary structure, NDH-1 is composed of 14 different subunits. Subunits NuoA, H, J, K, L, M, N constitute the membrane sector of the complex.

The protein resides in the cell membrane. The catalysed reaction is a quinone + NADH + 5 H(+)(in) = a quinol + NAD(+) + 4 H(+)(out). Its function is as follows. NDH-1 shuttles electrons from NADH, via FMN and iron-sulfur (Fe-S) centers, to quinones in the respiratory chain. The immediate electron acceptor for the enzyme in this species is believed to be ubiquinone. Couples the redox reaction to proton translocation (for every two electrons transferred, four hydrogen ions are translocated across the cytoplasmic membrane), and thus conserves the redox energy in a proton gradient. This chain is NADH-quinone oxidoreductase subunit K, found in Roseiflexus sp. (strain RS-1).